Consider the following 100-residue polypeptide: NADH-quinone oxidoreductase subunit K 2 (100 aa).

3 consecutive transmembrane segments (helical) span residues 2–22, 29–49, and 61–81; these read LAIE…TIGV, IVIF…FIAF, and FVFF…ALMI.

This sequence belongs to the complex I subunit 4L family. NDH-1 is composed of 14 different subunits. Subunits NuoA, H, J, K, L, M, N constitute the membrane sector of the complex.

The protein localises to the cell inner membrane. It catalyses the reaction a quinone + NADH + 5 H(+)(in) = a quinol + NAD(+) + 4 H(+)(out). In terms of biological role, NDH-1 shuttles electrons from NADH, via FMN and iron-sulfur (Fe-S) centers, to quinones in the respiratory chain. The immediate electron acceptor for the enzyme in this species is believed to be ubiquinone. Couples the redox reaction to proton translocation (for every two electrons transferred, four hydrogen ions are translocated across the cytoplasmic membrane), and thus conserves the redox energy in a proton gradient. This Citrifermentans bemidjiense (strain ATCC BAA-1014 / DSM 16622 / JCM 12645 / Bem) (Geobacter bemidjiensis) protein is NADH-quinone oxidoreductase subunit K 2.